An 842-amino-acid chain; its full sequence is Translation initiation factor IF-2 (842 aa).

The segment at 121–144 (TESTSVEKSESDDVTLEEESSKKV) is disordered. The tr-type G domain maps to 340–510 (PRAPVVTVMG…LLMAELLELK (171 aa)). Residues 349–356 (GHVDHGKT) are G1. GTP is bound at residue 349–356 (GHVDHGKT). A G2 region spans residues 374 to 378 (GITQH). Positions 396–399 (DTPG) are G3. GTP contacts are provided by residues 396 to 400 (DTPGH) and 450 to 453 (NKID). Residues 450 to 453 (NKID) form a G4 region. The segment at 486 to 488 (SAK) is G5.

It belongs to the TRAFAC class translation factor GTPase superfamily. Classic translation factor GTPase family. IF-2 subfamily.

Its subcellular location is the cytoplasm. Functionally, one of the essential components for the initiation of protein synthesis. Protects formylmethionyl-tRNA from spontaneous hydrolysis and promotes its binding to the 30S ribosomal subunits. Also involved in the hydrolysis of GTP during the formation of the 70S ribosomal complex. This is Translation initiation factor IF-2 from Ehrlichia chaffeensis (strain ATCC CRL-10679 / Arkansas).